We begin with the raw amino-acid sequence, 273 residues long: 4-hydroxy-tetrahydrodipicolinate reductase (273 aa).

Residues 8 to 13 (GCAGNM), E34, 102 to 104 (GTT), and 128 to 131 (SPNM) contribute to the NAD(+) site. H161 functions as the Proton donor/acceptor in the catalytic mechanism. A (S)-2,3,4,5-tetrahydrodipicolinate-binding site is contributed by H162. The active-site Proton donor is the K165. 171–172 (GT) is a (S)-2,3,4,5-tetrahydrodipicolinate binding site.

It belongs to the DapB family.

It is found in the cytoplasm. The enzyme catalyses (S)-2,3,4,5-tetrahydrodipicolinate + NAD(+) + H2O = (2S,4S)-4-hydroxy-2,3,4,5-tetrahydrodipicolinate + NADH + H(+). The catalysed reaction is (S)-2,3,4,5-tetrahydrodipicolinate + NADP(+) + H2O = (2S,4S)-4-hydroxy-2,3,4,5-tetrahydrodipicolinate + NADPH + H(+). The protein operates within amino-acid biosynthesis; L-lysine biosynthesis via DAP pathway; (S)-tetrahydrodipicolinate from L-aspartate: step 4/4. In terms of biological role, catalyzes the conversion of 4-hydroxy-tetrahydrodipicolinate (HTPA) to tetrahydrodipicolinate. The chain is 4-hydroxy-tetrahydrodipicolinate reductase from Methanosphaera stadtmanae (strain ATCC 43021 / DSM 3091 / JCM 11832 / MCB-3).